A 375-amino-acid polypeptide reads, in one-letter code: Acetylornithine aminotransferase (375 aa).

Residues Gly-102–Ala-103 and Phe-129 contribute to the pyridoxal 5'-phosphate site. A N(2)-acetyl-L-ornithine-binding site is contributed by Arg-132. Pyridoxal 5'-phosphate is bound at residue Asp-214–Gln-217. Lys-243 is subject to N6-(pyridoxal phosphate)lysine. Residue Ser-271 coordinates N(2)-acetyl-L-ornithine. Thr-272 contacts pyridoxal 5'-phosphate.

It belongs to the class-III pyridoxal-phosphate-dependent aminotransferase family. ArgD subfamily. Homodimer. It depends on pyridoxal 5'-phosphate as a cofactor.

The protein localises to the cytoplasm. The catalysed reaction is N(2)-acetyl-L-ornithine + 2-oxoglutarate = N-acetyl-L-glutamate 5-semialdehyde + L-glutamate. It participates in amino-acid biosynthesis; L-arginine biosynthesis; N(2)-acetyl-L-ornithine from L-glutamate: step 4/4. This Archaeoglobus fulgidus (strain ATCC 49558 / DSM 4304 / JCM 9628 / NBRC 100126 / VC-16) protein is Acetylornithine aminotransferase.